Consider the following 249-residue polypeptide: Isoprenyl transferase (249 aa).

Asp-25 is an active-site residue. Asp-25 lines the Mg(2+) pocket. Substrate-binding positions include 26–29, Trp-30, Arg-38, His-42, and 70–72; these read GNGR and STE. The active-site Proton acceptor is the Asn-73. Substrate contacts are provided by residues Trp-74, Arg-76, Arg-197, and 203–205; that span reads RLS. Residue Glu-216 coordinates Mg(2+).

It belongs to the UPP synthase family. Homodimer. Requires Mg(2+) as cofactor.

Functionally, catalyzes the condensation of isopentenyl diphosphate (IPP) with allylic pyrophosphates generating different type of terpenoids. This is Isoprenyl transferase from Streptococcus pyogenes serotype M1.